The following is a 221-amino-acid chain: U1 small nuclear ribonucleoprotein C (221 aa).

Residues 4–36 form a Matrin-type zinc finger; the sequence is HYCDYCDVFLTHDSVSVRKAHNSGRNHLQNVRE. The segment at 80–221 is disordered; sequence GAGPLSGSSD…PHSRTGYGPR (142 aa). Residues 142–158 are compositionally biased toward pro residues; that stretch reads YSRPPPQGGPYSRPPPD. Residues 178–190 show a composition bias toward low complexity; it reads PLGYGAPLPGAYP. Over residues 191 to 204 the composition is skewed to pro residues; the sequence is SGPPPNMRGPPPPL.

It belongs to the U1 small nuclear ribonucleoprotein C family. U1 snRNP is composed of the 7 core Sm proteins B/B', D1, D2, D3, E, F and G that assemble in a heptameric protein ring on the Sm site of the small nuclear RNA to form the core snRNP, and at least 3 U1 snRNP-specific proteins U1-70K, U1-A and U1-C. U1-C interacts with U1 snRNA and the 5' splice-site region of the pre-mRNA.

The protein localises to the nucleus. Its function is as follows. Component of the spliceosomal U1 snRNP, which is essential for recognition of the pre-mRNA 5' splice-site and the subsequent assembly of the spliceosome. U1-C is directly involved in initial 5' splice-site recognition for both constitutive and regulated alternative splicing. The interaction with the 5' splice-site seems to precede base-pairing between the pre-mRNA and the U1 snRNA. Stimulates commitment or early (E) complex formation by stabilizing the base pairing of the 5' end of the U1 snRNA and the 5' splice-site region. This is U1 small nuclear ribonucleoprotein C from Mycosarcoma maydis (Corn smut fungus).